A 168-amino-acid polypeptide reads, in one-letter code: 2-C-methyl-D-erythritol 2,4-cyclodiphosphate synthase (168 aa).

A divalent metal cation contacts are provided by D8 and H10. Residues 8–10 (DLH) and 34–35 (HS) each bind 4-CDP-2-C-methyl-D-erythritol 2-phosphate. A divalent metal cation is bound at residue H42. 4-CDP-2-C-methyl-D-erythritol 2-phosphate-binding positions include 56 to 58 (DIG), 61 to 65 (FPDTD), 132 to 135 (TTTE), and R142.

This sequence belongs to the IspF family. As to quaternary structure, homotrimer. It depends on a divalent metal cation as a cofactor.

The enzyme catalyses 4-CDP-2-C-methyl-D-erythritol 2-phosphate = 2-C-methyl-D-erythritol 2,4-cyclic diphosphate + CMP. It participates in isoprenoid biosynthesis; isopentenyl diphosphate biosynthesis via DXP pathway; isopentenyl diphosphate from 1-deoxy-D-xylulose 5-phosphate: step 4/6. Its function is as follows. Involved in the biosynthesis of isopentenyl diphosphate (IPP) and dimethylallyl diphosphate (DMAPP), two major building blocks of isoprenoid compounds. Catalyzes the conversion of 4-diphosphocytidyl-2-C-methyl-D-erythritol 2-phosphate (CDP-ME2P) to 2-C-methyl-D-erythritol 2,4-cyclodiphosphate (ME-CPP) with a corresponding release of cytidine 5-monophosphate (CMP). The sequence is that of 2-C-methyl-D-erythritol 2,4-cyclodiphosphate synthase from Desulfosudis oleivorans (strain DSM 6200 / JCM 39069 / Hxd3) (Desulfococcus oleovorans).